An 86-amino-acid chain; its full sequence is MKTLLLSLVVLTIACLDLGYTKTCFNDDLTNPKTTELCRHSMYFCFKNSWIAGGVERIERGCSLTCPDIKYNGKYIYCCTRDNCNA.

An N-terminal signal peptide occupies residues 1 to 21; it reads MKTLLLSLVVLTIACLDLGYT. 4 cysteine pairs are disulfide-bonded: Cys-24–Cys-45, Cys-38–Cys-62, Cys-66–Cys-78, and Cys-79–Cys-84.

Expressed by the venom gland.

It localises to the secreted. The chain is Short neurotoxin homolog NTL1 from Bungarus multicinctus (Many-banded krait).